The chain runs to 199 residues: FMN-dependent NADH:quinone oxidoreductase 2 (199 aa).

Residues serine 10, 17 to 19 (SDS), and 135 to 138 (TKGG) contribute to the FMN site.

The protein belongs to the azoreductase type 1 family. Homodimer. FMN serves as cofactor.

It catalyses the reaction 2 a quinone + NADH + H(+) = 2 a 1,4-benzosemiquinone + NAD(+). The enzyme catalyses N,N-dimethyl-1,4-phenylenediamine + anthranilate + 2 NAD(+) = 2-(4-dimethylaminophenyl)diazenylbenzoate + 2 NADH + 2 H(+). In terms of biological role, quinone reductase that provides resistance to thiol-specific stress caused by electrophilic quinones. Functionally, also exhibits azoreductase activity. Catalyzes the reductive cleavage of the azo bond in aromatic azo compounds to the corresponding amines. The polypeptide is FMN-dependent NADH:quinone oxidoreductase 2 (Mesoplasma florum (strain ATCC 33453 / NBRC 100688 / NCTC 11704 / L1) (Acholeplasma florum)).